Reading from the N-terminus, the 275-residue chain is Shikimate dehydrogenase (NADP(+)) (275 aa).

Residues 15-17 (SKS) and threonine 62 contribute to the shikimate site. The active-site Proton acceptor is lysine 66. Glutamate 78 is a binding site for NADP(+). Positions 87 and 102 each coordinate shikimate. Residues 128–132 (GAGGA), 151–156 (NRTAEK), and leucine 218 each bind NADP(+). Residue tyrosine 220 coordinates shikimate. Residue glycine 241 participates in NADP(+) binding.

This sequence belongs to the shikimate dehydrogenase family. As to quaternary structure, homodimer.

The catalysed reaction is shikimate + NADP(+) = 3-dehydroshikimate + NADPH + H(+). It participates in metabolic intermediate biosynthesis; chorismate biosynthesis; chorismate from D-erythrose 4-phosphate and phosphoenolpyruvate: step 4/7. Functionally, involved in the biosynthesis of the chorismate, which leads to the biosynthesis of aromatic amino acids. Catalyzes the reversible NADPH linked reduction of 3-dehydroshikimate (DHSA) to yield shikimate (SA). The chain is Shikimate dehydrogenase (NADP(+)) from Shouchella clausii (strain KSM-K16) (Alkalihalobacillus clausii).